Here is a 215-residue protein sequence, read N- to C-terminus: 2-dehydro-3-deoxy-phosphogluconate aldolase (215 aa).

The active-site Proton acceptor is glutamate 46. Positions 50, 74, and 134 each coordinate pyruvate. The active-site Schiff-base intermediate with substrate is lysine 134.

The protein belongs to the KHG/KDPG aldolase family. As to quaternary structure, homotrimer.

The enzyme catalyses 2-dehydro-3-deoxy-6-phospho-D-gluconate = D-glyceraldehyde 3-phosphate + pyruvate. Its pathway is carbohydrate acid metabolism; 2-dehydro-3-deoxy-D-gluconate degradation; D-glyceraldehyde 3-phosphate and pyruvate from 2-dehydro-3-deoxy-D-gluconate: step 2/2. Its function is as follows. Involved in the degradation of glucose via the Entner-Doudoroff pathway. Catalyzes the reversible, stereospecific retro-aldol cleavage of 2-keto-3-deoxy-6-phosphogluconate (KDPG) to pyruvate and D-glyceraldehyde-3-phosphate. Involved in the degradation of 3,6-anhydro-L-galactose (L-AnG), which is the major monomeric sugar of red macroalgae. The cleavage of KDPG to glyceraldehyde 3-phosphate and pyruvate is the sixth step of this pathway. The chain is 2-dehydro-3-deoxy-phosphogluconate aldolase from Pseudoalteromonas atlantica (strain T6c / ATCC BAA-1087).